A 501-amino-acid chain; its full sequence is MAAASVTSPGSLELLQPGFSKTLLGTRLEAKYLCSACKNILRRPFQAQCGHRYCSFCLTSILSSGPQNCAACVYEGLYEEGISILESSSAFPDNAARREVESLPAVCPNDGCTWKGTLKEYESCHEGLCPFLLTECPACKGLVRLSEKEHHTEQECPKRSLSCQHCRAPCSHVDLEVHYEVCPKFPLTCDGCGKKKIPRETFQDHVRACSKCRVLCRFHTVGCSEMVETENLQDHELQRLREHLALLLSSFLEAQASPGTLNQVGPELLQRCQILEQKIATFENIVCVLNREVERVAVTAEACSRQHRLDQDKIEALSNKVQQLERSIGLKDLAMADLEQKVSELEVSTYDGVFIWKISDFTRKRQEAVAGRTPAIFSPAFYTSRYGYKMCLRVYLNGDGTGRGTHLSLFFVVMKGPNDALLQWPFNQKVTLMLLDHNNREHVIDAFRPDVTSSSFQRPVSDMNIASGCPLFCPVSKMEAKNSYVRDDAIFIKAIVDLTGL.

An N-acetylalanine modification is found at alanine 2. Serine 5 carries the phosphoserine modification. The residue at position 7 (threonine 7) is a Phosphothreonine. A Phosphoserine modification is found at serine 11. At threonine 22 the chain carries Phosphothreonine. Lysine 31 participates in a covalent cross-link: Glycyl lysine isopeptide (Lys-Gly) (interchain with G-Cter in ubiquitin). The RING-type zinc-finger motif lies at 34-73 (CSACKNILRRPFQAQCGHRYCSFCLTSILSSGPQNCAACV). The residue at position 117 (threonine 117) is a Phosphothreonine; by PKC. 2 consecutive TRAF-type zinc fingers follow at residues 124-180 (CHEG…VHYE) and 177-233 (VHYE…ENLQ). The important for interaction with BIRC2 and BIRC3 stretch occupies residues 283-293 (ENIVCVLNREV). The stretch at 298–348 (VTAEACSRQHRLDQDKIEALSNKVQQLERSIGLKDLAMADLEQKVSELEVS) forms a coiled coil. Lysine 320 participates in a covalent cross-link: Glycyl lysine isopeptide (Lys-Gly) (interchain with G-Cter in ubiquitin). Positions 351–496 (DGVFIWKISD…DDAIFIKAIV (146 aa)) constitute an MATH domain.

This sequence belongs to the TNF receptor-associated factor family. A subfamily. In terms of assembly, homotrimer. Heterotrimer with TRAF1. Heterotrimer with TRAF3 (via TRAF domain). The domain containing the RING-type and the first TRAF-type zinc finger can also form homodimers (in vitro). Interacts with TNFRSF1B/TNFR2. Interacts with TNFRSF5/CD40. Interacts with TNFRSF4, TNFRSF7/CD27, TNFRSF8/CD30, TNFRSF9/CD137, TNFRSF11A/RANK, TNFRSF13B/TACI, TNFRSF14, TNFRSF16/NGFR, TNFRSF17/BCMA, TNFRSF18/AITR, TNFRSF19/TROY, TNFRSF19L/RELT and EDAR. Stimulation of TNF-alpha receptor TNFRSF1A leads to the formation of two distinct signaling complexes. Plasma membrane-bound complex I is composed of TNFRSF1A, TRADD, RIPK1, TRAF2 and BIRC2/c-IAP1 or BIRC3 which interacts with CHUCK/IKK-alpha, IKBKB/IKK-beta and IKBKG/IKK-gamma promoting cell survival. Subsequently, TRADD, RIPK1 and TRAF2 dissociate from TNFRSF1A and form cytoplasmic complex II with FADD and caspase CASP8 promoting cell apoptosis. Interacts with TRADD. Identified in a complex with TNFRSF1A, RIPK1 and IKBKB/IKK-beta. Interacts with RIPK2. Interacts with BIRC2 and BIRC3 N-terminus; a single BIRC2 or BIRC3 molecule interacts with a heterotrimer formed by TRAF1 and TRAF2, or a TRAF2 homotrimer. Identified in a complex composed of TRAF2, TRAF3, BIRC2 and BIRC3. Interacts with BIRC2; the interaction promotes BIRC2 stability. Interaction with BIRC2 and/or BIRC3 is essential for ubiquitination of IKBKE, degradation of NFKBIA and activation of NF-kappa-B. Within complex I, phosphorylated TRAF2 interacts (via 'Lys-63'-linked polyubiquitin chains) with CHUCK/IKK-alpha, IKBKB/IKK-beta, IKBKG/IKK-gamma TAB2, TAB3 and TAK1 in response to TNF-alpha stimulation. Within complex I, interacts with UXT isoform 1 (via TPQE motif); the interaction prevents the recruitment of FADD and CASP8/caspase 8 to complex I. Forms a complex composed of TNFRSF8/CD30 or TNFRSF1B/TNFR2, and TRAF1, TRAF2 and E3 ligase TRAIP. Within the complex, interacts with TRAIP; the interaction inhibits TRAF2-mediated NF-kappa B activation. Component of a complex composed of TANK and TBK1. Interacts with TRPC4AP. Interacts with MAP3K1/MEKK1, MAP3K5/ASK1 and MAP3K11/MLK3 in response to TNF-alpha stimulation; the interaction leads to JNK activation and interaction with MAP3K5 is inhibited by PRMT1. Component of a complex composed of MAP3K14/NIK BIRC3 and TRAF3; the interaction leads to BIRC2/3-mediated ubiquitination of TRAF3 upon CD40 engagement in a TRAF2-dependent manner. Interacts with MAP3K14/NIK in response to TNF-alpha stimulation; the interaction leads to NF-kappa B activation. Interacts with PEG3; the interaction may promote TRAF2-mediated NF-kappa B activation. Interacts with HIVEP3; the interaction may inhibit TNF-alpha-TRAF2-mediated NF-kappa B and JNK activation. Interacts with TANK/ITRAF; the interaction prevents interaction between TNFRSF1B/TNFR2 and TRAF2. Interacts with deubiquitinating enzyme CYLD; the interaction results in the deubiquitination and inactivation of TRAF2. Interacts with SIAH2; the interaction leads to TRAF2 ubiquitination and degradation. Interacts with E2 conjugating enzyme UBE2N/Ubc13, E3 ligase ITCH and RNF11 in response to TNF-alpha stimulation. Interacts with ubiquitin-editing enzyme TNFAIP3/A20 in response to TNF-alpha stimulation; the interaction promotes TRAF2 dissociation from UBE2N/Ubc13, ITCH, RNF11 and TAX1BP1 and prevents prolonged TRAF-2 ubiquitination. Interacts with TAX1BP1 in response to TNF-alpha stimulation; the interaction promotes TRAF2 dissociation from UBE2N/Ubc13 and TNFAIP3/A20, and prevents prolonged TRAF-2 ubiquitination. Interacts (via C-terminus) with EIF2AK2/PKR (via the kinase catalytic domain). Interacts with deubiquitinating enzyme USP48. Interacts with PTPN2; probably involved in TNF-mediated signaling. Interacts with Toll-like receptor TLR4/3 adapter TICAM1/TRIF; the interaction may promote TICAM1 ubiquitination. Interacts with kinase/endoribonuclease ERN1/IRE1 and DAB2IP in response to ER stress; the interaction requires DAB2IP. Interacts with ERN1/IRE1 and TAOK3 in response to ER stress; the interaction may promote TRAF2 phosphorylation. Interacts (via zinc fingers) with DAB2IP (via C-terminus PER domain) in response to TNF-alpha stimulation. Interacts with CASP8AP2/FLASH. Interacts with NFATC2IP; the interaction may repress IL-4 production in T cells. Interacts with kinase CDK9. Interacts with sphingosine kinase 1 SPHK1. Interacts with kinase TNIK. Interacts with TRAFD1. Interacts with DNA phosphodiesterase TDP2. Interacts with MAVS/IPS1. Interacts with CARD14. Interacts with GPS2. Interacts with XPNPEP3. Interacts with RIPK3. Interacts with RELL2. Interacts with LRRC19. Interacts with GAPDH; promoting TRAF2 ubiquitination. Phosphorylated at several serine residues within the first 128 amino acid residues. Phosphorylated at Thr-117 in response to signaling via TNF and TNFRSF1A. Phosphorylation at Thr-117 is required for 'Lys-63'-linked polyubiquitination, but not for 'Lys-48'-linked polyubiquitination. Phosphorylation at Thr-117 is important for interaction with IKKA and IKKB, activation of IKK and subsequent activation of NF-kappa-B. In terms of processing, undergoes both 'Lys-48'-linked and 'Lys-63'-linked polyubiquitination. Polyubiquitinated via 'Lys-63'-linked ubiquitin in response to TNF signaling; this requires prior phosphorylation at Thr-117. 'Lys-63'-linked polyubiquitination promotes TRAF2-mediated activation of NF-kappa-B. Can be polyubiquitinated at several Lys residues via 'Lys-48'-linked ubiquitin chains in response to TNF signaling, leading to proteasomal degradation. Autoubiquitinated, leading to its subsequent proteasomal degradation. Polyubiquitinated by BIRC2 and SIAH2, leading to its subsequent proteasomal degradation. Not ubiquitinated by BIRC3 or SIAH1. Deubiquitinated by CYLD, a protease that specifically cleaves 'Lys-63'-linked polyubiquitin chains. Ubiquination is inhibited by LRRC19; inhiits proteasomal degradation. Ubiquitinated at Lys-320 by the SCF(FBXL2) complex, leading to its degradation by the proteasome. Ubiquitinated by E3 ubiquitin-protein ligase complex containing FBXO7; leading to repression of NF-kappa-B signaling. In terms of tissue distribution, isoform 1 and isoform 2 are expressed in spleen, adipose tissues, skeletal muscles, thymus, testis, heart, lung, brain. Isoform 2 is very weakly expressed in heart, lung and brain.

It localises to the cytoplasm. The enzyme catalyses S-ubiquitinyl-[E2 ubiquitin-conjugating enzyme]-L-cysteine + [acceptor protein]-L-lysine = [E2 ubiquitin-conjugating enzyme]-L-cysteine + N(6)-ubiquitinyl-[acceptor protein]-L-lysine.. It functions in the pathway protein modification; protein ubiquitination. Has very low E3 ubiquitin ligase activity in the absence of sphingosine-1-phosphate. E3 ubiquitin ligase activity is strongly activated by cytoplasmic sphingosine-1-phosphate. Its function is as follows. E3 ubiquitin-protein ligase that regulates activation of NF-kappa-B and JNK and plays a central role in the regulation of cell survival and apoptosis. Catalyzes 'Lys-63'-linked ubiquitination of target proteins, such as BIRC3, IKBKE, MLST8, RIPK1 and TICAM1. Is an essential constituent of several E3 ubiquitin-protein ligase complexes, where it promotes the ubiquitination of target proteins by bringing them into contact with other E3 ubiquitin ligases. Regulates BIRC2 and BIRC3 protein levels by inhibiting their autoubiquitination and subsequent degradation; this does not depend on the TRAF2 RING-type zinc finger domain. Plays a role in mediating activation of NF-kappa-B by EIF2AK2/PKR. In complex with BIRC2 or BIRC3, promotes ubiquitination of IKBKE. Acts as a regulator of mTORC1 and mTORC2 assembly by mediating 'Lys-63'-linked ubiquitination of MLST8, thereby inhibiting formation of the mTORC2 complex, while facilitating assembly of the mTORC1 complex. Required for normal antibody isotype switching from IgM to IgG. This Mus musculus (Mouse) protein is TNF receptor-associated factor 2 (Traf2).